Here is a 499-residue protein sequence, read N- to C-terminus: Lysine--tRNA ligase (499 aa).

Residues E408 and E415 each contribute to the Mg(2+) site.

Belongs to the class-II aminoacyl-tRNA synthetase family. Homodimer. It depends on Mg(2+) as a cofactor.

Its subcellular location is the cytoplasm. The enzyme catalyses tRNA(Lys) + L-lysine + ATP = L-lysyl-tRNA(Lys) + AMP + diphosphate. The chain is Lysine--tRNA ligase from Thermoanaerobacter pseudethanolicus (strain ATCC 33223 / 39E) (Clostridium thermohydrosulfuricum).